We begin with the raw amino-acid sequence, 212 residues long: Large ribosomal subunit protein uL1 (212 aa).

This sequence belongs to the universal ribosomal protein uL1 family. As to quaternary structure, part of the 50S ribosomal subunit.

Binds directly to 23S rRNA. Probably involved in E site tRNA release. Functionally, protein L1 is also a translational repressor protein, it controls the translation of its operon by binding to its mRNA. This is Large ribosomal subunit protein uL1 from Haloarcula marismortui (strain ATCC 43049 / DSM 3752 / JCM 8966 / VKM B-1809) (Halobacterium marismortui).